The sequence spans 484 residues: Glycogen synthase (484 aa).

Residue Lys-15 participates in ADP-alpha-D-glucose binding.

This sequence belongs to the glycosyltransferase 1 family. Bacterial/plant glycogen synthase subfamily.

The catalysed reaction is [(1-&gt;4)-alpha-D-glucosyl](n) + ADP-alpha-D-glucose = [(1-&gt;4)-alpha-D-glucosyl](n+1) + ADP + H(+). It functions in the pathway glycan biosynthesis; glycogen biosynthesis. Its function is as follows. Synthesizes alpha-1,4-glucan chains using ADP-glucose. The protein is Glycogen synthase of Geotalea daltonii (strain DSM 22248 / JCM 15807 / FRC-32) (Geobacter daltonii).